The primary structure comprises 338 residues: NADPH dehydrogenase (338 aa).

22 to 25 provides a ligand contact to FMN; the sequence is SPMC. Tyr27 contacts substrate. Residues Ala59 and Gln101 each contribute to the FMN site. A substrate-binding site is contributed by 163–166; the sequence is HAAH. FMN-binding positions include Arg214 and 306-307; that span reads GR.

Belongs to the NADH:flavin oxidoreductase/NADH oxidase family. NamA subfamily. In terms of assembly, homotetramer. It depends on FMN as a cofactor.

The catalysed reaction is A + NADPH + H(+) = AH2 + NADP(+). Functionally, catalyzes the reduction of the double bond of an array of alpha,beta-unsaturated aldehydes and ketones. It also reduces the nitro group of nitroester and nitroaromatic compounds. It could have a role in detoxification processes. The polypeptide is NADPH dehydrogenase (Listeria monocytogenes serovar 1/2a (strain ATCC BAA-679 / EGD-e)).